Reading from the N-terminus, the 423-residue chain is 5-hydroxytryptamine receptor 1A (423 aa).

Residues 1–20 are disordered; that stretch reads MEGLSPGQGNNTTSSEGPFG. The Extracellular segment spans residues 1–38; that stretch reads MEGLSPGQGNNTTSSEGPFGTRGNATGISDVTFSYQVI. Polar residues predominate over residues 7–16; it reads GQGNNTTSSE. Residues N10, N11, and N24 are each glycosylated (N-linked (GlcNAc...) asparagine). A helical membrane pass occupies residues 39–59; that stretch reads TSLLLGTLIFCAVLGNACVVA. At 60–73 the chain is on the cytoplasmic side; it reads AIALERSLQNVANY. A helical membrane pass occupies residues 74 to 98; sequence LIGSLAVTDLMVSVLVLPMAALYQV. The Extracellular segment spans residues 99–107; sequence LNKWTLGQV. A helical membrane pass occupies residues 108-132; the sequence is TCDLFIALDVLCCTSSILHLCAIAL. The cysteines at positions 109 and 187 are disulfide-linked. Serotonin is bound by residues D116 and C120. A DRY motif; important for ligand-induced conformation changes motif is present at residues 133-135; sequence DRY. Residues 133–152 lie on the Cytoplasmic side of the membrane; that stretch reads DRYWAITDPIDYVNKRTPRR. The helical transmembrane segment at 153-174 threads the bilayer; the sequence is AAALISLTWLIGFLISIPPMLG. Residues 175 to 193 are Extracellular-facing; it reads WRTPEDRSDPDACTISKDH. The chain crosses the membrane as a helical span at residues 194 to 216; sequence GYTIYSTFGAFYIPLLLMLVLYG. The Cytoplasmic segment spans residues 217 to 346; it reads RIFRAARFRI…LARERKTVKT (130 aa). The disordered stretch occupies residues 235–277; the sequence is RKGADARSGVSPAPQPRKSVNGEPGGREWRQGPGSKAGGPLCT. 1D-myo-inositol 4-phosphate contacts are provided by K345, T346, and G352. The helical transmembrane segment at 347 to 370 threads the bilayer; sequence LGIIMGTFILCWLPFFIVALVLPF. Over 371–378 the chain is Extracellular; the sequence is CESSCHMP. Residues 379 to 403 form a helical membrane-spanning segment; sequence TLLGAIINWLGYSNSLLNPVIYAYF. Residues 396–400 carry the NPxxY motif; important for ligand-induced conformation changes and signaling motif; sequence NPVIY. 1D-myo-inositol 4-phosphate is bound by residues F403, N404, and K405. At 404 to 423 the chain is on the cytoplasmic side; sequence NKDFQNAFKKIVRCKFCRRR.

The protein belongs to the G-protein coupled receptor 1 family. 5-hydroxytryptamine receptor subfamily. HTR1A sub-subfamily. As to quaternary structure, heterodimer; heterodimerizes with GPER1. Interacts with YIF1B. Interacts with GPR39 and GALR1.

It localises to the cell membrane. The protein resides in the cell projection. Its subcellular location is the dendrite. With respect to regulation, G-protein coupled receptor activity is regulated by lipids: phosphatidylinositol 4-phosphate increases HTR1A-mediated activity. G-protein coupled receptor for 5-hydroxytryptamine (serotonin). Also functions as a receptor for various drugs and psychoactive substances. Ligand binding causes a conformation change that triggers signaling via guanine nucleotide-binding proteins (G proteins) and modulates the activity of downstream effectors, such as adenylate cyclase. HTR1A is coupled to G(i)/G(o) G alpha proteins and mediates inhibitory neurotransmission: signaling inhibits adenylate cyclase activity and activates a phosphatidylinositol-calcium second messenger system that regulates the release of Ca(2+) ions from intracellular stores. Beta-arrestin family members regulate signaling by mediating both receptor desensitization and resensitization processes. The protein is 5-hydroxytryptamine receptor 1A (HTR1A) of Vulpes vulpes (Red fox).